The chain runs to 264 residues: Phosphonoacetaldehyde hydrolase (264 aa).

Asp9 (nucleophile) is an active-site residue. 2 residues coordinate Mg(2+): Asp9 and Ala11. The active-site Schiff-base intermediate with substrate is the Lys50. Asp183 is a binding site for Mg(2+).

The protein belongs to the HAD-like hydrolase superfamily. PhnX family. Homodimer. The cofactor is Mg(2+).

It carries out the reaction phosphonoacetaldehyde + H2O = acetaldehyde + phosphate + H(+). Involved in phosphonate degradation. This is Phosphonoacetaldehyde hydrolase from Bacillus cytotoxicus (strain DSM 22905 / CIP 110041 / 391-98 / NVH 391-98).